A 347-amino-acid polypeptide reads, in one-letter code: GMP reductase (347 aa).

108 to 131 serves as a coordination point for NADP(+); that stretch reads ADFEKTVQILALNPALNFVCIDVA. Positions 181 and 183 each coordinate K(+). C186 acts as the Thioimidate intermediate in catalysis. 216 to 239 is a binding site for NADP(+); sequence IVSDGGCTMPGDVAKAFGGGADFV.

Belongs to the IMPDH/GMPR family. GuaC type 1 subfamily. Homotetramer.

It catalyses the reaction IMP + NH4(+) + NADP(+) = GMP + NADPH + 2 H(+). Its function is as follows. Catalyzes the irreversible NADPH-dependent deamination of GMP to IMP. It functions in the conversion of nucleobase, nucleoside and nucleotide derivatives of G to A nucleotides, and in maintaining the intracellular balance of A and G nucleotides. The polypeptide is GMP reductase (Salmonella choleraesuis (strain SC-B67)).